The following is a 298-amino-acid chain: Acetylglutamate kinase (298 aa).

Residues 66–67 (GG), Arg88, and Asn193 contribute to the substrate site.

Belongs to the acetylglutamate kinase family. ArgB subfamily.

The protein localises to the cytoplasm. It catalyses the reaction N-acetyl-L-glutamate + ATP = N-acetyl-L-glutamyl 5-phosphate + ADP. It functions in the pathway amino-acid biosynthesis; L-arginine biosynthesis; N(2)-acetyl-L-ornithine from L-glutamate: step 2/4. Catalyzes the ATP-dependent phosphorylation of N-acetyl-L-glutamate. This is Acetylglutamate kinase from Methanosphaera stadtmanae (strain ATCC 43021 / DSM 3091 / JCM 11832 / MCB-3).